The following is a 260-amino-acid chain: Acetylglutamate kinase (260 aa).

Substrate is bound by residues 41-42 (GG), arginine 63, and asparagine 156.

The protein belongs to the acetylglutamate kinase family. ArgB subfamily.

It localises to the cytoplasm. It catalyses the reaction N-acetyl-L-glutamate + ATP = N-acetyl-L-glutamyl 5-phosphate + ADP. It functions in the pathway amino-acid biosynthesis; L-arginine biosynthesis; N(2)-acetyl-L-ornithine from L-glutamate: step 2/4. Its function is as follows. Catalyzes the ATP-dependent phosphorylation of N-acetyl-L-glutamate. This Halalkalibacterium halodurans (strain ATCC BAA-125 / DSM 18197 / FERM 7344 / JCM 9153 / C-125) (Bacillus halodurans) protein is Acetylglutamate kinase.